We begin with the raw amino-acid sequence, 1095 residues long: Putative patatin-like phospholipase domain-containing protein M110.7 (1095 aa).

A helical transmembrane segment spans residues 9–29; the sequence is LLLIFENILELCMCITLVILI. The segment at 75–113 is disordered; that stretch reads HKKRSSKEEMTPDKKRDSSEKISKQPPRELFEPNEQEQV. Residues 80-105 are compositionally biased toward basic and acidic residues; the sequence is SKEEMTPDKKRDSSEKISKQPPRELF. A nucleoside 3',5'-cyclic phosphate-binding positions include 144-237, 327-416, and 450-509; these read VETL…LTSF, RKYE…IQFL, and IETG…TVMA. Positions 768–935 constitute a PNPLA domain; sequence IVFGGGGARG…VNNLPADIMR (168 aa). A GXGXXG motif is present at residues 772–777; it reads GGGARG. The GXSXG signature appears at 799 to 803; it reads GTSIG. Residue S801 is the Nucleophile of the active site. D922 serves as the catalytic Proton acceptor. A DGA/G motif is present at residues 922–924; sequence DGA.

The protein belongs to the NTE family.

Its subcellular location is the membrane. In Caenorhabditis elegans, this protein is Putative patatin-like phospholipase domain-containing protein M110.7.